Consider the following 64-residue polypeptide: uncharacterized protein (64 aa).

The chain crosses the membrane as a helical span at residues 33–55; sequence YTPLGSYMIFGIVHYFCSYHIGI.

The protein localises to the membrane. This is an uncharacterized protein from Saccharomyces cerevisiae (strain ATCC 204508 / S288c) (Baker's yeast).